Here is a 279-residue protein sequence, read N- to C-terminus: Phosphate-binding protein PstS (279 aa).

The signal sequence occupies residues 1-18 (MKKVIILIFMLSTSLLYN). Cys-19 carries N-palmitoyl cysteine lipidation. Cys-19 is lipidated: S-diacylglycerol cysteine. Phosphate-binding positions include 33–35 (STT), Ser-63, and 151–153 (SGS).

It belongs to the PstS family. As to quaternary structure, monomer (in vitro). The complex is composed of two ATP-binding proteins (PstB), two transmembrane proteins (PstC and PstA) and a solute-binding protein (PstS).

Its subcellular location is the cell membrane. Functionally, binds inorganic phosphate with a Kd of 1.2 uM. Part of the ABC transporter complex PstSACB involved in phosphate import. This chain is Phosphate-binding protein PstS, found in Borreliella burgdorferi (strain ATCC 35210 / DSM 4680 / CIP 102532 / B31) (Borrelia burgdorferi).